The chain runs to 592 residues: Frizzled-9 (592 aa).

An N-terminal signal peptide occupies residues 1–23 (MAVPPLLRGALLLWQLLATGGAA). At 24–230 (LEIGRFDPER…EVFWSRRDKD (207 aa)) the chain is on the extracellular side. The FZ domain maps to 35 to 156 (RGPAPCQAME…NDPHALCMEA (122 aa)). 5 disulfide bridges follow: Cys-40–Cys-101, Cys-48–Cys-94, Cys-85–Cys-123, Cys-112–Cys-153, and Cys-116–Cys-140. An N-linked (GlcNAc...) asparagine glycan is attached at Asn-54. The segment at 59-173 (PNLLGHTSQG…PTEPHKGLGM (115 aa)) is required for Wnt-activated receptor activity. Asn-159 carries an N-linked (GlcNAc...) asparagine glycan. A helical membrane pass occupies residues 231-251 (FALVWMAVWSALCFFSTAFTV). The Cytoplasmic portion of the chain corresponds to 252 to 267 (FTFLLEPHRFQYPERP). Residues 268-288 (IIFLSMCYNVYSLAFLIRAVA) form a helical membrane-spanning segment. The Extracellular portion of the chain corresponds to 289–316 (GAQSVACDQEAGALYVIQEGLENTGCTL). Residues 317–337 (VFLLLYYFGMASSLWWVVLTL) traverse the membrane as a helical segment. The Cytoplasmic segment spans residues 338–356 (TWFLAAGKKWGHEAIEAHG). A helical membrane pass occupies residues 357-377 (SYFHMAAWGLPALKTIVVLTL). Topologically, residues 378–401 (RKVAGDELTGLCYVASMDPAALTG) are extracellular. A helical membrane pass occupies residues 402–422 (FVLVPLSCYLVLGTSFLLTGF). The Cytoplasmic portion of the chain corresponds to 423-448 (VALFHIRKIMKTGGTNTEKLEKLMVK). A helical transmembrane segment spans residues 449 to 469 (IGVFSILYTVPATCVIVCYVY). Topologically, residues 470–509 (ERLNMDFWRLRATEQPCTAATVPGGRRDCSLPGGSVPTVA) are extracellular. A helical transmembrane segment spans residues 510 to 530 (VFMLKIFMSLVVGITSGVWVW). Residues 531-592 (SSKTFQTWQS…DPSLENPTHL (62 aa)) are Cytoplasmic-facing. Residues 533-538 (KTFQTW) carry the Lys-Thr-X-X-X-Trp motif, mediates interaction with the PDZ domain of Dvl family members motif. Positions 555-592 (ACRTPGGYGRGTHCHYKAPTVVLHMTKTDPSLENPTHL) are required for CTNNB1 accumulation and TCF transcription factor activity.

It belongs to the G-protein coupled receptor Fz/Smo family. Post-translationally, ubiquitinated by ZNRF3, leading to its degradation by the proteasome. In terms of tissue distribution, in the embryo, found in the neural tube, trunk skeletal muscle precursors (myotomes), limb skeletal anlagen, craniofacial regions and nephric ducts. In the adult, expression is abundant in heart, brain, testis and skeletal muscle. In the testis, expressed in all spermatogenic cell types. Lower levels in adult lung, liver and kidney. Barely detectable in spleen. Expressed also in chondrocytes.

The protein localises to the cell membrane. Functionally, receptor for WNT2 that is coupled to the beta-catenin canonical signaling pathway, which leads to the activation of disheveled proteins, inhibition of GSK-3 kinase, nuclear accumulation of beta-catenin and activation of Wnt target genes. Plays a role in neuromuscular junction (NMJ) assembly by negatively regulating the clustering of acetylcholine receptors (AChR) through the beta-catenin canonical signaling pathway. May play a role in neural progenitor cells (NPCs) viability through the beta-catenin canonical signaling pathway by negatively regulating cell cycle arrest leading to inhibition of neuron apoptotic process. During hippocampal development, regulates neuroblast proliferation and apoptotic cell death. Controls bone formation through non canonical Wnt signaling mediated via ISG15. Positively regulates bone regeneration through non canonical Wnt signaling. This Mus musculus (Mouse) protein is Frizzled-9 (Fzd9).